A 224-amino-acid chain; its full sequence is Perchlorate reductase assembly chaperone protein (224 aa).

It belongs to the type II DMSO reductase enzyme chaperone family.

The protein resides in the cytoplasm. Its function is as follows. May function as a system-specific molybdenum chaperone protein essential for the assembly of the perchlorate reductase PcrAB complex prior to its periplasmic translocation via the Tat pathway. This chain is Perchlorate reductase assembly chaperone protein (pcrD), found in Dechloromonas aromatica (strain RCB).